The sequence spans 631 residues: Polyadenylate-binding protein, cytoplasmic and nuclear (631 aa).

Residues Met1 to Ala56 form a disordered region. 4 RRM domains span residues Ala58 to Arg136, Gly146 to Ser223, Thr239 to Lys316, and Val342 to Arg419. Residues Gly518–Pro545 form a disordered region. The PABC domain maps to Pro545–Lys626.

The protein belongs to the polyadenylate-binding protein type-1 family.

Its subcellular location is the cytoplasm. It is found in the nucleus. Binds the poly(A) tail of mRNA. Appears to be an important mediator of the multiple roles of the poly(A) tail in mRNA biogenesis, stability and translation. In the nucleus, involved in both mRNA cleavage and polyadenylation. Is also required for efficient mRNA export to the cytoplasm. Acts in concert with a poly(A)-specific nuclease (PAN) to affect poly(A) tail shortening, which may occur concomitantly with either nucleocytoplasmic mRNA transport or translational initiation. In the cytoplasm, stimulates translation initiation and regulates mRNA decay through translation termination-coupled poly(A) shortening, probably mediated by PAN. The protein is Polyadenylate-binding protein, cytoplasmic and nuclear (PAB1) of Meyerozyma guilliermondii (strain ATCC 6260 / CBS 566 / DSM 6381 / JCM 1539 / NBRC 10279 / NRRL Y-324) (Yeast).